The sequence spans 107 residues: Large ribosomal subunit protein uL24 (107 aa).

Belongs to the universal ribosomal protein uL24 family. In terms of assembly, part of the 50S ribosomal subunit.

Functionally, one of two assembly initiator proteins, it binds directly to the 5'-end of the 23S rRNA, where it nucleates assembly of the 50S subunit. In terms of biological role, one of the proteins that surrounds the polypeptide exit tunnel on the outside of the subunit. The sequence is that of Large ribosomal subunit protein uL24 from Kosmotoga olearia (strain ATCC BAA-1733 / DSM 21960 / TBF 19.5.1).